The following is a 111-amino-acid chain: ATP-dependent Clp protease adapter protein ClpS (111 aa).

It belongs to the ClpS family. Binds to the N-terminal domain of the chaperone ClpA.

Its function is as follows. Involved in the modulation of the specificity of the ClpAP-mediated ATP-dependent protein degradation. The protein is ATP-dependent Clp protease adapter protein ClpS of Legionella pneumophila (strain Corby).